The following is a 98-amino-acid chain: Large ribosomal subunit protein bL28 (98 aa).

The protein belongs to the bacterial ribosomal protein bL28 family.

The sequence is that of Large ribosomal subunit protein bL28 from Bartonella bacilliformis (strain ATCC 35685 / KC583 / Herrer 020/F12,63).